Here is a 367-residue protein sequence, read N- to C-terminus: MSFLATLKEPGTSVCLKNEPAQSPSLHDHAPSTAAISREYIANLFDMPFMDLLLKAQGVHRQHFTANAVQISTLLSIKTGNCPEDCGYCSQSGHHRDTTGLQAEKRLEIDKVIAAAKRAKASGSSRFCMGAAWKHPSAKDMPYVAELIKEVKALGLETCMTLGMLTAEQSEQLAEAGLDYYNHNLDTSRRYYDEVVSTRSYDERLQTINHVRKSGINVCSGSIVGMGESREDRIDWVLELASMPLPPESIPVNLLVPIQGTPLGDKVLSEGQLPVLEWIRTIAVTRICCPSSYVRLSAGRESLSDAEQALAFMAGANSFFYGDKLLTTGNASQSNDDRMMQMLGLIPEAPKPKLTVIDALSGHQSQL.

Residues 67 to 291 (NAVQISTLLS…IAVTRICCPS (225 aa)) form the Radical SAM core domain. The [4Fe-4S] cluster site is built by C82, C86, and C89. [2Fe-2S] cluster contacts are provided by C128, C159, C219, and R295.

This sequence belongs to the radical SAM superfamily. Biotin synthase family. Homodimer. Requires [4Fe-4S] cluster as cofactor. The cofactor is [2Fe-2S] cluster.

The catalysed reaction is (4R,5S)-dethiobiotin + (sulfur carrier)-SH + 2 reduced [2Fe-2S]-[ferredoxin] + 2 S-adenosyl-L-methionine = (sulfur carrier)-H + biotin + 2 5'-deoxyadenosine + 2 L-methionine + 2 oxidized [2Fe-2S]-[ferredoxin]. It participates in cofactor biosynthesis; biotin biosynthesis; biotin from 7,8-diaminononanoate: step 2/2. In terms of biological role, catalyzes the conversion of dethiobiotin (DTB) to biotin by the insertion of a sulfur atom into dethiobiotin via a radical-based mechanism. The protein is Biotin synthase of Psychrobacter sp. (strain PRwf-1).